Consider the following 137-residue polypeptide: Envelope glycoprotein L (137 aa).

A signal peptide spans 1–25 (MRAVGVFLATCLVTIFVLPTWGNWA). The segment at 23–128 (NWAYPCCHVT…SVEDLFGANL (106 aa)) is interaction with gH. 2 disulfides stabilise this stretch: C28-C56 and C29-C79.

It belongs to the herpesviridae glycoprotein L family. In terms of assembly, interacts with glycoprotein H (gH); this interaction is necessary for the correct processing and cell surface expression of gH. The heterodimer gH/gL seems to interact with gB trimers during fusion. The heterodimer gH/gL interacts with host EPHA2 to facilitate virus internalization and fusion.

The protein resides in the virion membrane. The protein localises to the host cell membrane. It localises to the host Golgi apparatus. It is found in the host trans-Golgi network. Its function is as follows. The heterodimer glycoprotein H-glycoprotein L is required for the fusion of viral and plasma membranes leading to virus entry into the host cell. Acts as a functional inhibitor of gH and maintains gH in an inhibited form. Upon binding to host integrins, gL dissociates from gH leading to activation of the viral fusion glycoproteins gB and gH. The heterodimer gH/gL targets also host EPHA2 to promote viral entry. The sequence is that of Envelope glycoprotein L from Homo sapiens (Human).